The sequence spans 355 residues: Chorismate synthase (355 aa).

Residues Arg44 and Arg49 each coordinate NADP(+). FMN-binding positions include 121–123 (HFS), Gly277, 292–296 (KPTPS), and Arg319.

It belongs to the chorismate synthase family. It depends on FMNH2 as a cofactor.

It catalyses the reaction 5-O-(1-carboxyvinyl)-3-phosphoshikimate = chorismate + phosphate. Its pathway is metabolic intermediate biosynthesis; chorismate biosynthesis; chorismate from D-erythrose 4-phosphate and phosphoenolpyruvate: step 7/7. Catalyzes the anti-1,4-elimination of the C-3 phosphate and the C-6 proR hydrogen from 5-enolpyruvylshikimate-3-phosphate (EPSP) to yield chorismate, which is the branch point compound that serves as the starting substrate for the three terminal pathways of aromatic amino acid biosynthesis. This reaction introduces a second double bond into the aromatic ring system. In Thermococcus kodakarensis (strain ATCC BAA-918 / JCM 12380 / KOD1) (Pyrococcus kodakaraensis (strain KOD1)), this protein is Chorismate synthase.